A 668-amino-acid chain; its full sequence is Bestrophin-3 (668 aa).

The Cytoplasmic portion of the chain corresponds to Met1–Leu31. A Ca(2+)-binding site is contributed by Ala10. Residues Leu32–Arg51 form a helical membrane-spanning segment. The Extracellular segment spans residues Leu52 to Arg60. A helical membrane pass occupies residues Tyr61–Leu82. Residues Gly83–Thr237 are Cytoplasmic-facing. The chain crosses the membrane as a helical span at residues Gln238–Arg255. The Extracellular portion of the chain corresponds to Gln256 to Pro274. The chain crosses the membrane as a helical span at residues Ile275–Leu288. The Cytoplasmic segment spans residues Lys289–Lys668. Positions 293, 296, 301, and 304 each coordinate Ca(2+). Disordered stretches follow at residues Ser400 to Cys454, Arg473 to Ser493, and Thr532 to Ser570. Positions Pro425 to Leu436 are enriched in basic and acidic residues. The segment covering Thr475–Ser489 has biased composition (low complexity). The segment covering Thr532–Pro545 has biased composition (polar residues).

The protein belongs to the anion channel-forming bestrophin (TC 1.A.46) family. Calcium-sensitive chloride channel subfamily. In terms of tissue distribution, present in skeletal muscle and weakly in brain, spinal cord, bone marrow and retina.

It localises to the cell membrane. The catalysed reaction is chloride(in) = chloride(out). Functionally, ligand-gated anion channel that allows the movement of chloride monoatomic anions across cell membranes when activated by calcium (Ca2+). This chain is Bestrophin-3, found in Homo sapiens (Human).